The chain runs to 510 residues: GMP synthase [glutamine-hydrolyzing] (510 aa).

Positions 5-195 (LVLVVDFGGQ…LFNVCNLKGD (191 aa)) constitute a Glutamine amidotransferase type-1 domain. Cys-82 serves as the catalytic Nucleophile. Catalysis depends on residues His-169 and Glu-171. A GMPS ATP-PPase domain is found at 196–385 (WSMSSFAEQQ…LGIPHKLVWR (190 aa)). 223 to 229 (SGGVDSS) serves as a coordination point for ATP.

As to quaternary structure, homodimer.

The catalysed reaction is XMP + L-glutamine + ATP + H2O = GMP + L-glutamate + AMP + diphosphate + 2 H(+). The protein operates within purine metabolism; GMP biosynthesis; GMP from XMP (L-Gln route): step 1/1. In terms of biological role, catalyzes the synthesis of GMP from XMP. The polypeptide is GMP synthase [glutamine-hydrolyzing] (Clostridium botulinum (strain Okra / Type B1)).